A 423-amino-acid chain; its full sequence is MYNLTFSPSLSSSLLSFTQQTPAAIVSSSPPDLVLQQKLRFVVETSPDRWAYVIFWQKMFDDQSDRSYLVWVDGHFCGNKNNNSQENYTTNSIECELMMDGGDDLELFYAASFYGEDRSPRKEVSDESLVWLTGPDELRFSNYERAKEAGFHGVHTLVSIPINNGIIELGSSESIIQNRNFINRVKSIFGSGKTTKHTNQTGSYPKPAVSDHSKSGNQQFGSERKRRRKLETTRVAAATKEKHHPAVLSHVEAEKQRREKLNHRFYALRAIVPKVSRMDKASLLSDAVSYIESLKSKIDDLETEIKKMKMTETDKLDNSSSNTSPSSVEYQVNQKPSKSNRGSDLEVQVKIVGEEAIIRVQTENVNHPTSALMSALMEMDCRVQHANASRLSQVMVQDVVVLVPEGLRSEDRLRTTLVRTLSL.

The segment at 192-243 (GKTTKHTNQTGSYPKPAVSDHSKSGNQQFGSERKRRRKLETTRVAAATKEKH) is disordered. Residues 245-294 (PAVLSHVEAEKQRREKLNHRFYALRAIVPKVSRMDKASLLSDAVSYIESL) form the bHLH domain. Residues 312-343 (ETDKLDNSSSNTSPSSVEYQVNQKPSKSNRGS) are disordered. Positions 318–327 (NSSSNTSPSS) are enriched in low complexity. Over residues 328-342 (VEYQVNQKPSKSNRG) the composition is skewed to polar residues.

Homodimer.

It is found in the nucleus. This Arabidopsis thaliana (Mouse-ear cress) protein is Transcription factor bHLH14 (BHLH14).